Consider the following 136-residue polypeptide: Fluoride-specific ion channel FluC (136 aa).

4 consecutive transmembrane segments (helical) span residues 3-23 (TLPPLYATLNVALGGAIGAVL), 46-66 (ATLAINALGSLLMGVLAGVLF), 78-98 (LLIGTGILGGFTTFSAFSLEV), and 109-129 (FAALYVVLSVSLAISALVFGL). Na(+) contacts are provided by Gly-86 and Thr-89.

Belongs to the fluoride channel Fluc/FEX (TC 1.A.43) family.

It is found in the cell inner membrane. The enzyme catalyses fluoride(in) = fluoride(out). Na(+) is not transported, but it plays an essential structural role and its presence is essential for fluoride channel function. In terms of biological role, fluoride-specific ion channel. Important for reducing fluoride concentration in the cell, thus reducing its toxicity. This is Fluoride-specific ion channel FluC from Erythrobacter litoralis (strain HTCC2594).